The sequence spans 210 residues: Selenoprotein T2 (210 aa).

Positions 1 to 21 (MAEYSQTGILTALLLFTVVTV) are cleaved as a signal peptide. Residues 62-65 (CISU) constitute a cross-link (cysteinyl-selenocysteine (Cys-Sec)). Sec-65 is a non-standard amino acid (selenocysteine).

It belongs to the SelWTH family. Selenoprotein T subfamily. In terms of processing, may contain a selenide-sulfide bond between Cys-62 and Sec-65. This bond is speculated to serve as redox-active pair. As to expression, widely expressed in the embryo.

In Danio rerio (Zebrafish), this protein is Selenoprotein T2.